Here is a 295-residue protein sequence, read N- to C-terminus: Bis(5'-nucleosyl)-tetraphosphatase, symmetrical (295 aa).

The interval 271 to 295 is disordered; it reads LSIEHPRHTHTPRRKAKKRHKRSPK. Residues 277-295 show a composition bias toward basic residues; that stretch reads RHTHTPRRKAKKRHKRSPK.

It belongs to the Ap4A hydrolase family.

The catalysed reaction is P(1),P(4)-bis(5'-adenosyl) tetraphosphate + H2O = 2 ADP + 2 H(+). Functionally, hydrolyzes diadenosine 5',5'''-P1,P4-tetraphosphate to yield ADP. This chain is Bis(5'-nucleosyl)-tetraphosphatase, symmetrical, found in Xylella fastidiosa (strain M23).